The following is a 208-amino-acid chain: NAD(P)H-quinone oxidoreductase subunit I (208 aa).

2 consecutive 4Fe-4S ferredoxin-type domains span residues 55 to 84 and 95 to 124; these read GRIH…VDWV and RNYS…MTEE. [4Fe-4S] cluster is bound by residues Cys-64, Cys-67, Cys-70, Cys-74, Cys-104, Cys-107, Cys-110, and Cys-114.

It belongs to the complex I 23 kDa subunit family. As to quaternary structure, NDH-1 is composed of at least 11 different subunits. [4Fe-4S] cluster is required as a cofactor.

It is found in the cellular thylakoid membrane. It carries out the reaction a plastoquinone + NADH + (n+1) H(+)(in) = a plastoquinol + NAD(+) + n H(+)(out). The catalysed reaction is a plastoquinone + NADPH + (n+1) H(+)(in) = a plastoquinol + NADP(+) + n H(+)(out). In terms of biological role, NDH-1 shuttles electrons from an unknown electron donor, via FMN and iron-sulfur (Fe-S) centers, to quinones in the respiratory and/or the photosynthetic chain. The immediate electron acceptor for the enzyme in this species is believed to be plastoquinone. Couples the redox reaction to proton translocation, and thus conserves the redox energy in a proton gradient. The protein is NAD(P)H-quinone oxidoreductase subunit I of Prochlorococcus marinus subsp. pastoris (strain CCMP1986 / NIES-2087 / MED4).